The sequence spans 493 residues: Galactose-1-phosphate uridylyltransferase (493 aa).

It belongs to the galactose-1-phosphate uridylyltransferase type 2 family.

It is found in the cytoplasm. The enzyme catalyses alpha-D-galactose 1-phosphate + UDP-alpha-D-glucose = alpha-D-glucose 1-phosphate + UDP-alpha-D-galactose. Its pathway is carbohydrate metabolism; galactose metabolism. The polypeptide is Galactose-1-phosphate uridylyltransferase (Lactococcus lactis subsp. cremoris (strain SK11)).